A 357-amino-acid polypeptide reads, in one-letter code: DNA replication and repair protein RecF (357 aa).

30–37 (GANGSGKT) is an ATP binding site.

Belongs to the RecF family.

Its subcellular location is the cytoplasm. Its function is as follows. The RecF protein is involved in DNA metabolism; it is required for DNA replication and normal SOS inducibility. RecF binds preferentially to single-stranded, linear DNA. It also seems to bind ATP. This is DNA replication and repair protein RecF from Shigella boydii serotype 4 (strain Sb227).